We begin with the raw amino-acid sequence, 405 residues long: S-adenosylmethionine synthase (405 aa).

139–144 (GQGSVD) lines the ATP pocket.

Belongs to the AdoMet synthase 2 family. Mg(2+) is required as a cofactor.

The enzyme catalyses L-methionine + ATP + H2O = S-adenosyl-L-methionine + phosphate + diphosphate. The protein operates within amino-acid biosynthesis; S-adenosyl-L-methionine biosynthesis; S-adenosyl-L-methionine from L-methionine: step 1/1. In terms of biological role, catalyzes the formation of S-adenosylmethionine from methionine and ATP. This Thermococcus onnurineus (strain NA1) protein is S-adenosylmethionine synthase.